A 294-amino-acid chain; its full sequence is Cytidine deaminase (294 aa).

CMP/dCMP-type deaminase domains lie at 48–168 (DEDA…FGPK) and 186–294 (LTGD…TLLA). 89–91 (NME) is a substrate binding site. His102 is a binding site for Zn(2+). The active-site Proton donor is the Glu104. Cys129 and Cys132 together coordinate Zn(2+).

This sequence belongs to the cytidine and deoxycytidylate deaminase family. Homodimer. Zn(2+) serves as cofactor.

It carries out the reaction cytidine + H2O + H(+) = uridine + NH4(+). The enzyme catalyses 2'-deoxycytidine + H2O + H(+) = 2'-deoxyuridine + NH4(+). In terms of biological role, this enzyme scavenges exogenous and endogenous cytidine and 2'-deoxycytidine for UMP synthesis. The sequence is that of Cytidine deaminase from Enterobacter sp. (strain 638).